We begin with the raw amino-acid sequence, 352 residues long: C-glycoside deglycosidase alpha subunit (352 aa).

Residue Glu-147 participates in Mn(2+) binding. The active-site Proton acceptor is His-149. Residues Asp-179, His-269, and Glu-305 each contribute to the Mn(2+) site.

The protein belongs to the C-glycoside deglycosidase alpha subunit family. In terms of assembly, heterodimer composed of an alpha subunit (CarB2) and a beta subunit (CarC2). Requires a divalent metal cation as cofactor.

The enzyme catalyses 3''-dehydroorientin = 1,5-anhydro-D-erythro-hex-1-en-3-ulose + luteolin. With respect to regulation, activity is strongly reduced in the presence of chelating agents. In terms of biological role, carbon-carbon bond-cleaving enzyme which participates in the metabolism of C-glycosides. Acts on the C8-glycosylated compound 3''-dehydroorientin (3''-oxo-orientin). The protein is C-glycoside deglycosidase alpha subunit of Arthrobacter globiformis (strain ATCC 8010 / DSM 20124 / JCM 1332 / NBRC 12137 / NCIMB 8907 / NRRL B-2979 / 168).